Reading from the N-terminus, the 605-residue chain is Arginine--tRNA ligase (605 aa).

A 'HIGH' region motif is present at residues 131 to 141 (ANPTGPMHVGH). The tract at residues 290-309 (PPPKSKKGQPAPAQAASNSA) is disordered. The segment covering 298-309 (QPAPAQAASNSA) has biased composition (low complexity).

It belongs to the class-I aminoacyl-tRNA synthetase family. In terms of assembly, monomer.

It is found in the cytoplasm. The catalysed reaction is tRNA(Arg) + L-arginine + ATP = L-arginyl-tRNA(Arg) + AMP + diphosphate. This Anaeromyxobacter sp. (strain Fw109-5) protein is Arginine--tRNA ligase.